Here is a 500-residue protein sequence, read N- to C-terminus: Probable lipoprotein aminopeptidase LpqL (500 aa).

The first 24 residues, 1–24, serve as a signal peptide directing secretion; the sequence is MVNKSRMMPAVLAVAVVVAFLTTG. The N-palmitoyl cysteine moiety is linked to residue C25. The S-diacylglycerol cysteine moiety is linked to residue C25. The region spanning 140-231 is the PA domain; it reads VTGPLVAAPA…VTKSVGFQLR (92 aa). 2 residues coordinate Zn(2+): H271 and D283. Catalysis depends on E316, which acts as the Proton acceptor. 3 residues coordinate Zn(2+): E317, D345, and H448.

Belongs to the peptidase M28 family. M28A subfamily. Zn(2+) is required as a cofactor. Post-translationally, modified by Lgt on Cys-25 with an S-linked diacylglycerol with a mixture of C16 and C19 fatty acids (palmitic and tuberculostearic acid), signal peptide is removed by LspA, modified by Lnt with an amide-linked mixture of C16 and C19 fatty acids, expressed in M.bovis.

The protein resides in the cell membrane. It carries out the reaction Release of an N-terminal amino acid, Xaa-|-Yaa-, in which Xaa is preferably Leu, but may be other amino acids including Pro although not Arg or Lys, and Yaa may be Pro. Amino acid amides and methyl esters are also readily hydrolyzed, but rates on arylamides are exceedingly low.. In terms of biological role, an aminopeptidase; acts on free N-terminal amino groups with a very strong preference for Leu in the first position. The polypeptide is Probable lipoprotein aminopeptidase LpqL (lpqL) (Mycobacterium tuberculosis (strain ATCC 25618 / H37Rv)).